The sequence spans 427 residues: Septin-8-B (427 aa).

Residues 39 to 305 enclose the Septin-type G domain; sequence QGFCFNILCV…ELYRRCKLEE (267 aa). The tract at residues 49–56 is G1 motif; sequence GETGIGKS. Residues 49–56, Gly104, 185–193, Gly239, and Arg254 each bind GTP; these read GETGIGKS and KADTISKSE. The segment at 101–104 is G3 motif; it reads DTVG. The tract at residues 184–187 is G4 motif; sequence AKAD. The stretch at 320–407 forms a coiled coil; sequence LQETYEAKRK…RRKVAMETLQ (88 aa). The segment covering 406–418 has biased composition (polar residues); that stretch reads LQSQSFQATSQQP. Positions 406-427 are disordered; it reads LQSQSFQATSQQPLKKDKDRKN.

It belongs to the TRAFAC class TrmE-Era-EngA-EngB-Septin-like GTPase superfamily. Septin GTPase family.

This Xenopus laevis (African clawed frog) protein is Septin-8-B (sept8-b).